Consider the following 596-residue polypeptide: Fc receptor-like protein 5 (596 aa).

The signal sequence occupies residues 1 to 26; that stretch reads MSGSFSPCVVFTQMWLTLLVVTPVNG. Topologically, residues 27–496 are extracellular; that stretch reads QHEAAQQSVV…MTKNRSVPMA (470 aa). 5 Ig-like C2-type domains span residues 34–115, 106–199, 207–294, 296–384, and 398–483; these read SVVS…VEFS, PSMH…NTVV, PRPV…TAFI, PVQR…SFVS, and PVLT…IRIS. 3 cysteine pairs are disulfide-bonded: Cys55–Cys99, Cys137–Cys181, and Cys228–Cys277. Asn324 carries an N-linked (GlcNAc...) asparagine glycan. Cystine bridges form between Cys325-Cys373 and Cys419-Cys466. A glycan (N-linked (GlcNAc...) asparagine) is linked at Asn436. A helical membrane pass occupies residues 497 to 517; that stretch reads AGITVGLLIMAVGVFLFYCWF. Over 518–596 the chain is Cytoplasmic; the sequence is SRKAGGKPTS…RSRCQMAEKK (79 aa). Disordered stretches follow at residues 522 to 544 and 561 to 596; these read GGKPTSDDSRNPSDSEPQEPTYY and EENVIYTEVRRTQPRQKHADQESESPRSRCQMAEKK. Over residues 577–596 the composition is skewed to basic and acidic residues; that stretch reads KHADQESESPRSRCQMAEKK.

As to quaternary structure, interacts with CR2. Interacts with CD19. Phosphorylated on cytoplasmic tyrosines; required for interaction with protein tyrosine phosphatases and protein tyrosine kinases. Preferentially expressed in marginal zone B cells.

It is found in the cell membrane. Functionally, plays an important role in B-cell response to antigen that acts both as a negative or positive coreceptor. Inhibits B-cell receptor (BCR) signaling in the absence of CR2 stimulation but engagement with CR2 and the BCR lead to a superior calcium response compared to CR2 and BCR costimulation. May be involved in B-cell development and differentiation in peripheral lymphoid organs and may be useful markers of B-cell stages. May have an immunoregulatory role in marginal zone B-cells. May play a role in fertilization. This is Fc receptor-like protein 5 (Fcrl5) from Mus musculus (Mouse).